A 429-amino-acid polypeptide reads, in one-letter code: Autophagy-related protein 18 (429 aa).

WD repeat units lie at residues methionine 1–glutamate 36, lysine 69–threonine 114, proline 139–valine 182, alanine 185–glutamine 225, serine 230–aspartate 269, lysine 309–lysine 355, and valine 367–glycine 407. The L/FRRG motif motif lies at phenylalanine 226–serine 230. The span at serine 262–proline 275 shows a compositional bias: low complexity. A disordered region spans residues serine 262–arginine 308.

This sequence belongs to the WD repeat PROPPIN family. As to quaternary structure, component of the PI(3,5)P2 regulatory complex.

It is found in the preautophagosomal structure membrane. The protein localises to the vacuole membrane. The protein resides in the endosome membrane. The PI(3,5)P2 regulatory complex regulates both the synthesis and turnover of phosphatidylinositol 3,5-bisphosphate (PtdIns(3,5)P2). Necessary for proper vacuole morphology. Plays an important role in osmotically-induced vacuole fragmentation. Required for cytoplasm to vacuole transport (Cvt) vesicle formation, pexophagy and starvation-induced autophagy. Involved in correct atg9 trafficking to the pre-autophagosomal structure. Might also be involved in premeiotic DNA replication. The sequence is that of Autophagy-related protein 18 (atg18) from Neosartorya fischeri (strain ATCC 1020 / DSM 3700 / CBS 544.65 / FGSC A1164 / JCM 1740 / NRRL 181 / WB 181) (Aspergillus fischerianus).